The sequence spans 304 residues: Methionyl-tRNA formyltransferase (304 aa).

111–114 contacts (6S)-5,6,7,8-tetrahydrofolate; that stretch reads SLLP.

The protein belongs to the Fmt family.

It catalyses the reaction L-methionyl-tRNA(fMet) + (6R)-10-formyltetrahydrofolate = N-formyl-L-methionyl-tRNA(fMet) + (6S)-5,6,7,8-tetrahydrofolate + H(+). In terms of biological role, attaches a formyl group to the free amino group of methionyl-tRNA(fMet). The formyl group appears to play a dual role in the initiator identity of N-formylmethionyl-tRNA by promoting its recognition by IF2 and preventing the misappropriation of this tRNA by the elongation apparatus. The sequence is that of Methionyl-tRNA formyltransferase from Campylobacter fetus subsp. fetus (strain 82-40).